The sequence spans 218 residues: Ribonuclease S-7 (218 aa).

Positions 1–22 are cleaved as a signal peptide; sequence MLNSPLTSVLFVLLFVLSPIYG. Gln-32 provides a ligand contact to RNA. Cys-38 and Cys-43 are joined by a disulfide. An N-linked (GlcNAc...) asparagine glycan is attached at Asn-49. His-53 lines the RNA pocket. His-53 functions as the Proton donor in the catalytic mechanism. Asn-59 is a glycosylation site (N-linked (GlcNAc...) asparagine). The cysteines at positions 67 and 116 are disulfide-linked. Residues 91–92, Phe-105, 108–109, and 112–113 each bind RNA; these read DL, HE, and KH. Glu-109 is an active-site residue. His-113 serves as the catalytic Proton acceptor. The N-linked (GlcNAc...) asparagine glycan is linked to Asn-162. Cystine bridges form between Cys-177–Cys-207 and Cys-190–Cys-201.

The protein belongs to the RNase T2 family.

The protein resides in the secreted. It is found in the extracellular space. It carries out the reaction a ribonucleotidyl-ribonucleotide-RNA + H2O = a 3'-end 3'-phospho-ribonucleotide-RNA + a 5'-end dephospho-ribonucleoside-RNA + H(+). Its function is as follows. Self-incompatibility (SI) is the inherited ability of a flowering plant to prevent self-fertilization by discriminating between self and non-self pollen during pollination. In many species of the Solanaceae, self-incompatibility is controlled by the single, multiallelic locus S. This stylar glycoprotein is associated with expression of self-incompatibility in potato. The protein is Ribonuclease S-7 of Nicotiana alata (Winged tobacco).